A 3083-amino-acid chain; its full sequence is MRGSGTGAALLVLLASVLWVTVRSQQRGLFPAILNLATNAHISANATCGEKGPEMFCKLVEHVPGRPVRHAQCRVCDGNSTNPRERHPISHAIDGTNNWWQSPSIQNGREYHWVTVTLDLRQVFQVAYIIIKAANAPRPGNWILERSVDGVKFKPWQYYAVSDTECLTRYKITPRRGPPTYRADNEVICTSYYSKLVPLEHGEIHTSLINGRPSADDPSPQLLEFTSARYIRLRLQRIRTLNADLMTLSHRDLRDLDPIVTRRYYYSIKDISVGGMCICYGHASSCPWDEEAKQLQCQCEHNTCGESCDRCCPGYHQQPWRPGTISSGNECEECNCHNKAKDCYYDSSVAKERRSLNTAGQYSGGGVCVNCSQNTTGINCETCIDQYYRPHKVSPYDDHPCRPCNCDPVGSLSSVCIKDDRHADLANGKWPGQCPCRKGYAGDKCDRCQFGYRGFPNCIPCDCRTVGSLNEDPCIEPCLCKKNVEGKNCDRCKPGFYNLKERNPEGCSECFCFGVSGVCDSLTWSISQVTNMSGWLVTDLMSTNKIRSQQDVLGGHRQISINNTAVMQRLTSTYYWAAPEAYLGNKLTAFGGFLKYTVSYDIPVETVDSDLMSHADIIIKGNGLTISTRAEGLSLQPYEEYFNVVRLVPENFRDFDTRREIDRDQLMTVLANVTHLLIRANYNSAKMALYRLDSVSLDIASPNAIDLAVAADVEHCECPQGYTGTSCEACLPGYYRVDGILFGGICQPCECHGHASECDIHGICSVCTHNTTGDHCEQCLPGFYGTPSRGTPGDCQPCACPLSIDSNNFSPTCHLTDGEEVVCDQCAPGYSGSWCERCADGYYGNPTVPGGTCVPCNCSGNVDPLEAGHCDSVTGECLKCLWNTDGAHCERCADGFYGDAVTAKNCRACDCHENGSLSGICHLETGLCDCKPHVTGQQCDQCLSGYYGLDTGLGCVPCNCSVEGSVSDNCTEEGQCHCGPGVSGKQCDRCSHGFYAFQDGGCTPCDCAHTQNNCDPASGECLCPPHTQGLKCEECEEAYWGLDPEQGCQACNCSAVGSTSAQCDVLSGHCPCKKGFGGQSCHQCSLGYRSFPDCVPCGCDLRGTLPDTCDLEQGLCSCSEDGGTCSCKENAVGPQCSKCQAGTFALRGDNPQGCSPCFCFGLSQLCSELEGYVRTLITLASDQPLLHVVSQSNLKGTIEGVHFQPPDTLLDAEAVRQHIYAEPFYWRLPKQFQGDQLLAYGGKLQYSVAFYSTLGTGTSNYEPQVLIKGGRARKHVIYMDAPAPENGVRQDYEVRMKEEFWKYFNSVSEKHVTHSDFMSVLSNIDYILIKASYGQGLQQSRIANISMEVGRKAVELPAEGEAALLLELCVCPPGTAGHSCQDCAPGYYREKLPESGGRGPRPLLAPCVPCNCNNHSDVCDPETGKCLSCRDHTSGDHCELCASGYYGKVTGLPGDCTPCTCPHHPPFSFSPTCVVEGDSDFRCNACLPGYEGQYCERCSAGYHGNPRAAGGSCQTCDCNPQGSVHSDCDRASGQCVCKPGATGLHCEKCLPRHILMESDCVSCDDDCVGPLLNDLDSVGDAVLSLNLTGVSPAPYGILENLENTTKYFQRYLIKENAKKIRAEIQLEGIAEQTENLQKELTRVLARHQKVNAEMERTSNGTQALATFIEQLHANIKEITEKVATLNQTARKDFQPPVSALQSMHQNISSLLGLIKERNFTEMQQNATLELKAAKDLLSRIQKRFQKPQEKLKALKEANSLLSNHSEKLQAAEELLKEAGSKTQESNLLLLLVKANLKEFQEKKLRVQEEQNVTSELIAKGREWVDAAGTHTAAAQDTLTQLEHHRDELLLWARKIRSHVDDLVMQMSKRRARDLVHRAEQHASELQSRAGALDRDLENVRNVSLNATSAAHVHSNIQTLTEEAEMLAADAHKTANKTDLISESLASRGKAVLQRSSRFLKESVSTRRKQQGITMKLDELKNLTSQFQESMDNIMKQANDSLAMLRESPGGMREKGRKARELAAAANESAVKTLEDVLALSLRVFNTSEDLSRVNATVQETNDLLHNSTMTTLLAGRKMKDMEMQANLLLDRLKPLKTLEENLSRNLSEIKLLISRARKQVASIKVAVSADRDCIRAYQPQTSSTNYNTLILNVKTQEPDNLLFYLGSSSSSDFLAVEMRRGKVAFLWDLGSGSTRLEFPEVSINNNRWHSIYITRFGNMGSLSVKEASAAENPPVRTSKSPGPSKVLDINNSTLMFVGGLGGQIKKSPAVKVTHFKGCMGEAFLNGKSIGLWNYIEREGKCNGCFGSSQNEDSSFHFDGSGYAMVEKTLRPTVTQIVILFSTFSPNGLLFYLASNGTKDFLSIELVRGRVKVMVDLGSGPLTLMTDRRYNNGTWYKIAFQRNRKQGLLAVFDAYDTSDKETKQGETPGAASDLNRLEKDLIYVGGLPHSKAVRKGVSSRSYVGCIKNLEISRSTFDLLRNSYGVRKGCALEPIQSVSFLRGGYVEMPPKSLSPESSLLATFATKNSSGILLVALGKDAEEAGGAQAHVPFFSIMLLEGRIEVHVNSGDGTSLRKALLHAPTGSYSDGQEHSISLVRNRRVITIQVDENSPVEMKLGPLTEGKTIDISNLYIGGLPEDKATPMLKMRTSFHGCIKNVVLDAQLLDFTHATGSEQVELDTCLLAEEPMQSLHREHGELPPEPPTLPQPELCAVDTAPGYVAGAHQFGLSQNSHLVLPLNQSDVRKRLQVQLSIRTFASSGLIYYVAHQNQMDYATLQLQEGRLHFMFDLGKGRTKVSHPALLSDGKWHTVKTEYIKRKAFMTVDGQESPSVTVVGNATTLDVERKLYLGGLPSHYRARNIGTITHSIPACIGEIMVNGQQLDKDRPLSASAVDRCYVVAQEGTFFEGSGYAALVKEGYKVRLDLNITLEFRTTSKNGVLLGISSAKVDAIGLEIVDGKVLFHVNNGAGRITATYQPRAARALCDGKWHTLQAHKSKHRIVLTVDGNSVRAESPHTHSTSADTNDPIYVGGYPAHIKQNCLSSRASFRGCVRNLRLSRGSQVQSLDLSRAFDLQGVFPHSCPGPEP.

Positions Met-1 to Ser-24 are cleaved as a signal peptide. At Gln-25 the chain carries Pyrrolidone carboxylic acid. One can recognise a Laminin N-terminal domain in the interval Gln-25–Met-276. Intrachain disulfides connect Cys-277/Cys-286, Cys-279/Cys-297, Cys-299/Cys-308, Cys-311/Cys-331, Cys-334/Cys-343, and Cys-336/Cys-368. Laminin EGF-like domains follow at residues Cys-277–Glu-333, Cys-334–Pro-403, Cys-404–Pro-460, and Cys-461–Glu-509. Asn-370 carries N-linked (GlcNAc...) asparagine glycosylation. Disulfide bonds link Cys-371-Cys-380, Cys-383-Cys-401, Cys-404-Cys-416, Cys-406-Cys-434, Cys-436-Cys-445, Cys-448-Cys-458, Cys-461-Cys-474, Cys-463-Cys-478, Cys-480-Cys-489, and Cys-492-Cys-507. The region spanning Cys-510–Cys-519 is the Laminin EGF-like 5; first part domain. One can recognise a Laminin IV type A 1 domain in the interval Thr-523–His-715. Asn-672 is a glycosylation site (N-linked (GlcNAc...) asparagine). The Laminin EGF-like 5; second part domain maps to Cys-716–Pro-748. 32 disulfide bridges follow: Cys-749–Cys-758, Cys-751–Cys-764, Cys-767–Cys-776, Cys-779–Cys-795, Cys-798–Cys-813, Cys-800–Cys-823, Cys-826–Cys-835, Cys-838–Cys-853, Cys-856–Cys-870, Cys-858–Cys-877, Cys-880–Cys-889, Cys-892–Cys-906, Cys-909–Cys-921, Cys-911–Cys-928, Cys-930–Cys-939, Cys-942–Cys-955, Cys-958–Cys-970, Cys-960–Cys-976, Cys-978–Cys-987, Cys-990–Cys-1002, Cys-1005–Cys-1014, Cys-1007–Cys-1021, Cys-1023–Cys-1032, Cys-1035–Cys-1048, Cys-1051–Cys-1063, Cys-1053–Cys-1070, Cys-1072–Cys-1081, Cys-1084–Cys-1094, Cys-1097–Cys-1109, Cys-1099–Cys-1125, Cys-1127–Cys-1136, and Cys-1139–Cys-1154. Laminin EGF-like domains follow at residues Cys-749–Pro-797, Cys-798–Pro-855, Cys-856–Ala-908, Cys-909–Pro-957, Cys-958–Pro-1004, Cys-1005–Ala-1050, Cys-1051–Pro-1096, and Cys-1097–Pro-1156. Positions Arg-1147–Asp-1149 match the Cell attachment site motif. The region spanning Cys-1157–Cys-1166 is the Laminin EGF-like 14; first part domain. The region spanning Ile-1177–Leu-1368 is the Laminin IV type A 2 domain. Asn-1344 carries N-linked (GlcNAc...) asparagine glycosylation. The region spanning Cys-1369 to Pro-1409 is the Laminin EGF-like 14; second part domain. 12 disulfide bridges follow: Cys-1410/Cys-1419, Cys-1412/Cys-1426, Cys-1429/Cys-1438, Cys-1441/Cys-1456, Cys-1459/Cys-1473, Cys-1461/Cys-1483, Cys-1486/Cys-1495, Cys-1498/Cys-1513, Cys-1516/Cys-1528, Cys-1518/Cys-1535, Cys-1537/Cys-1546, and Cys-1549/Cys-1560. 3 Laminin EGF-like domains span residues Cys-1410–Pro-1458, Cys-1459–Thr-1515, and Cys-1516–Ser-1562. The interval Asp-1564–Ile-2123 is domain II and I. A coiled-coil region spans residues Ala-1617–Lys-1691. Asn-1659, Asn-1686, Asn-1718, Asn-1725, Asn-1763, and Asn-1811 each carry an N-linked (GlcNAc...) asparagine glycan. The stretch at Gln-1723–Glu-1809 forms a coiled coil. The stretch at Lys-1868–Asn-1901 forms a coiled coil. Residues Asn-1935, Asn-2026, Asn-2045, and Asn-2066 are each glycosylated (N-linked (GlcNAc...) asparagine). 5 consecutive Laminin G-like domains span residues Lys-2124–Cys-2304, Asp-2312–Cys-2488, Ile-2493–Cys-2679, Ala-2721–Cys-2893, and Gln-2898–Cys-3078. Cys-2278 and Cys-2304 are joined by a disulfide. An N-linked (GlcNAc...) asparagine glycan is attached at Asn-2355. 2 cysteine pairs are disulfide-bonded: Cys-2464–Cys-2488 and Cys-2652–Cys-2679. Residue Asn-2834 is glycosylated (N-linked (GlcNAc...) asparagine). Cys-2868 and Cys-2893 are joined by a disulfide. N-linked (GlcNAc...) asparagine glycosylation occurs at Asn-2923. Cys-3047 and Cys-3078 form a disulfide bridge.

As to quaternary structure, laminin is a complex glycoprotein, consisting of three different polypeptide chains (alpha, beta, gamma), which are bound to each other by disulfide bonds into a cross-shaped molecule comprising one long and three short arms with globules at each end. Alpha-1 is a subunit of laminin-1 (laminin-111 or EHS laminin) and laminin-3 (laminin-121 or S-laminin). Tyrosine phosphorylated by PKDCC/VLK.

It localises to the secreted. It is found in the extracellular space. Its subcellular location is the extracellular matrix. The protein resides in the basement membrane. Functionally, binding to cells via a high affinity receptor, laminin is thought to mediate the attachment, migration and organization of cells into tissues during embryonic development by interacting with other extracellular matrix components. This Mus musculus (Mouse) protein is Laminin subunit alpha-1 (Lama1).